A 756-amino-acid polypeptide reads, in one-letter code: Polyribonucleotide nucleotidyltransferase (756 aa).

2 residues coordinate Mg(2+): aspartate 532 and aspartate 538. One can recognise a KH domain in the interval proline 598–isoleucine 657. The 70-residue stretch at glycine 669–valine 738 folds into the S1 motif domain.

This sequence belongs to the polyribonucleotide nucleotidyltransferase family. It depends on Mg(2+) as a cofactor.

Its subcellular location is the cytoplasm. The enzyme catalyses RNA(n+1) + phosphate = RNA(n) + a ribonucleoside 5'-diphosphate. In terms of biological role, involved in mRNA degradation. Catalyzes the phosphorolysis of single-stranded polyribonucleotides processively in the 3'- to 5'-direction. This is Polyribonucleotide nucleotidyltransferase from Rhodococcus erythropolis (strain PR4 / NBRC 100887).